The following is a 261-amino-acid chain: Ribosomal RNA small subunit methyltransferase J (261 aa).

Residues 111–112, 127–128, 163–164, and aspartate 181 each bind S-adenosyl-L-methionine; these read RD, ER, and SS.

It belongs to the methyltransferase superfamily. RsmJ family.

Its subcellular location is the cytoplasm. The enzyme catalyses guanosine(1516) in 16S rRNA + S-adenosyl-L-methionine = N(2)-methylguanosine(1516) in 16S rRNA + S-adenosyl-L-homocysteine + H(+). In terms of biological role, specifically methylates the guanosine in position 1516 of 16S rRNA. The polypeptide is Ribosomal RNA small subunit methyltransferase J (Shewanella sp. (strain MR-4)).